The sequence spans 926 residues: Alanine--tRNA ligase (926 aa).

4 residues coordinate Zn(2+): H577, H581, C680, and H684.

Belongs to the class-II aminoacyl-tRNA synthetase family. It depends on Zn(2+) as a cofactor.

It is found in the cytoplasm. It carries out the reaction tRNA(Ala) + L-alanine + ATP = L-alanyl-tRNA(Ala) + AMP + diphosphate. Catalyzes the attachment of alanine to tRNA(Ala) in a two-step reaction: alanine is first activated by ATP to form Ala-AMP and then transferred to the acceptor end of tRNA(Ala). Also edits incorrectly charged Ser-tRNA(Ala) and Gly-tRNA(Ala) via its editing domain. The protein is Alanine--tRNA ligase of Methylacidiphilum infernorum (isolate V4) (Methylokorus infernorum (strain V4)).